The chain runs to 194 residues: Large ribosomal subunit protein eL15 (194 aa).

Residues 165-194 (AGKKGRGLRNKGKGAEKVRPSIRANEGKGK) form a disordered region. Residues 167 to 176 (KKGRGLRNKG) show a composition bias toward basic residues. Residues 177-194 (KGAEKVRPSIRANEGKGK) show a composition bias toward basic and acidic residues.

The protein belongs to the eukaryotic ribosomal protein eL15 family. In terms of assembly, part of the 50S ribosomal subunit.

In Pyrococcus furiosus (strain ATCC 43587 / DSM 3638 / JCM 8422 / Vc1), this protein is Large ribosomal subunit protein eL15.